The following is a 407-amino-acid chain: Homeobox even-skipped homolog protein 1 (407 aa).

Disordered stretches follow at residues 29–120 (EAVG…SDFY) and 137–179 (EYQH…ACSA). Polar residues predominate over residues 102 to 114 (DSLSGQGQPSSSD). Residues 183–242 (MRRYRTAFTREQIARLEKEFYRENYVSRPRRCELAAALNLPETTIKVWFQNRRMKDKRQR) constitute a DNA-binding region (homeobox).

The protein belongs to the even-skipped homeobox family.

Its subcellular location is the nucleus. May play a role in the specification of neuronal cell types. The polypeptide is Homeobox even-skipped homolog protein 1 (EVX1) (Homo sapiens (Human)).